Consider the following 132-residue polypeptide: Protein NrdI (132 aa).

This sequence belongs to the NrdI family.

Functionally, probably involved in ribonucleotide reductase function. The chain is Protein NrdI from Bartonella tribocorum (strain CIP 105476 / IBS 506).